We begin with the raw amino-acid sequence, 588 residues long: Mitochondrial tRNA methylthiotransferase CDK5RAP1 (588 aa).

A mitochondrion-targeting transit peptide spans 1–30 (MHPLRCVLQVQRLSAPFTSMCWVLLRTCRA). Disordered stretches follow at residues 33–53 (SVSS…QKDF) and 70–91 (ASVP…YLSG). The MTTase N-terminal domain maps to 99–219 (RKVYLETYGC…LPRLLAVVES (121 aa)). 6 residues coordinate [4Fe-4S] cluster: C108, C144, C182, C257, C261, and C264. Residues 243 to 498 (SPSATSAFVS…TVFREEASKA (256 aa)) form the Radical SAM core domain. One can recognise a TRAM domain in the interval 500–575 (KTSVGCSQLV…SQTLKGHILC (76 aa)).

Belongs to the methylthiotransferase family. MiaB subfamily. Interacts with CDK5R1 (p35 form). CDK5RAP1, CDK5RAP2 and CDK5RAP3 show competitive binding to CDK5R1. Probably forms a complex with CDK5R1 and CDK5. It depends on [4Fe-4S] cluster as a cofactor. As to expression, expressed in brain, liver, skeletal muscle and heart.

The protein localises to the mitochondrion. The enzyme catalyses N(6)-dimethylallyladenosine(37) in tRNA + (sulfur carrier)-SH + AH2 + 2 S-adenosyl-L-methionine = 2-methylsulfanyl-N(6)-dimethylallyladenosine(37) in tRNA + (sulfur carrier)-H + 5'-deoxyadenosine + L-methionine + A + S-adenosyl-L-homocysteine + 2 H(+). In terms of biological role, methylthiotransferase that catalyzes the conversion of N6-(dimethylallyl)adenosine (i(6)A) to 2-methylthio-N6-(dimethylallyl)adenosine (ms(2)i(6)A) at position 37 (adjacent to the 3'-end of the anticodon) of four mitochondrial DNA-encoded tRNAs (Ser(UCN), Phe, Tyr and Trp). Essential for efficient and highly accurate protein translation by the ribosome. Specifically inhibits CDK5 activation by CDK5R1. Essential for efficient mitochondrial protein synthesis and respiratory chain. The sequence is that of Mitochondrial tRNA methylthiotransferase CDK5RAP1 from Mus musculus (Mouse).